The sequence spans 450 residues: Regulator of sigma E protease (450 aa).

A Zn(2+)-binding site is contributed by histidine 22. Glutamate 23 is a catalytic residue. Residue histidine 26 participates in Zn(2+) binding. Residues 98–120 form a helical membrane-spanning segment; it reads AAIIAAGPVANFIFAIFAYWLVF. PDZ domains lie at 115–186 and 199–291; these read AYWL…APFG and HWAF…TPDT. Transmembrane regions (helical) follow at residues 376–398 and 426–445; these read VIYY…LFPL and FSYR…ALFN.

It belongs to the peptidase M50B family. In terms of assembly, interacts with RseA. It depends on Zn(2+) as a cofactor.

It is found in the cell inner membrane. A site-2 regulated intramembrane protease (S2P) that cleaves the peptide bond between 'Ala-108' and 'Cys-109' in the transmembrane region of RseA. Part of a regulated intramembrane proteolysis (RIP) cascade. Acts on DegS-cleaved RseA to release the cytoplasmic domain of RseA. This provides the cell with sigma-E (RpoE) activity through the proteolysis of RseA. This chain is Regulator of sigma E protease (rseP), found in Salmonella typhi.